A 150-amino-acid chain; its full sequence is Galactose-binding lectin (150 aa).

Residues histidine 16 and glycine 19 each contribute to the D-galactose site. The N-linked (GlcNAc...) asparagine glycan is linked to asparagine 26. Residues aspartate 27, 35–37, histidine 64, and glycine 67 contribute to the D-galactose site; that span reads DIH. Residue asparagine 74 is glycosylated (N-linked (GlcNAc...) asparagine). Residues glutamate 75, 83–85, histidine 108, and glycine 111 each bind D-galactose; that span reads DRH. N-linked (GlcNAc...) asparagine glycosylation is present at asparagine 118. Residues glutamate 119 and 127-129 contribute to the D-galactose site; that span reads DKH.

Homodimer. Likely to form large oligomers; oligomerization enhances hemagglutination activity. In terms of processing, glycosylated.

Its activity is regulated as follows. Hemagglutination activity is not dependent on divalent cations. Hemagglutination activity is highly inhibited by D-galactose and N-acetyl-D-galactosamine, and to a lesser extent by raffinose. Also inhibited by melibiose and alpha-lactose, but not by beta-lactose or D-glucose. Its function is as follows. D-galactose-binding lectin. Also binds N-acetyl-D-galactosamine. Has hemagglutination activity towards all types of human erythrocytes (O, A and B) and rabbit erythrocytes. Agglutinates Gram-negative and Gram-positive bacteria including E.coli DH5-alpha and L.plantarum ATCC8014, respectively, and has bacteriostatic activity against them. Also agglutinates M.lysodeikticus. May be involved in innate immunity by recognizing and eliminating pathogens. This chain is Galactose-binding lectin, found in Mytilus californianus (California mussel).